The primary structure comprises 316 residues: MEETNNSSEKGFLLLGFSDQPQLERFLFAIILYFYVLSLLGNTALILVCCLDSRLHTPMYFFLSNLSCVDICFTTSVAPQLLVTMNKKDKTMSYGGCVAQLYVAMGLGSSECILLAVMAYDRYAAVCRPLRYIAIMHPRFCASLAGGAWLSGLITSLIQCSLTVQLPLCGHRTLDHIFCEVPVLIKLACVDTTFNEAELFVASVVFLIVPVLLILVSYGFITQAVLRIKSAAGRQKAFGTCSSHLVVVIIFYGTIIFMYLQPANRRSKNQGKFVSLFYTIVTPLLNPIIYTLRNKDVKGALRTLILGSAAGQSHKD.

Residues 1–25 (MEETNNSSEKGFLLLGFSDQPQLER) are Extracellular-facing. N-linked (GlcNAc...) asparagine glycans are attached at residues Asn-5 and Asn-6. A helical transmembrane segment spans residues 26–49 (FLFAIILYFYVLSLLGNTALILVC). Residues 50-57 (CLDSRLHT) are Cytoplasmic-facing. The chain crosses the membrane as a helical span at residues 58-79 (PMYFFLSNLSCVDICFTTSVAP). Over 80-100 (QLLVTMNKKDKTMSYGGCVAQ) the chain is Extracellular. Residues Cys-97 and Cys-189 are joined by a disulfide bond. The helical transmembrane segment at 101 to 120 (LYVAMGLGSSECILLAVMAY) threads the bilayer. Topologically, residues 121–139 (DRYAAVCRPLRYIAIMHPR) are cytoplasmic. Residues 140–158 (FCASLAGGAWLSGLITSLI) traverse the membrane as a helical segment. Topologically, residues 159–195 (QCSLTVQLPLCGHRTLDHIFCEVPVLIKLACVDTTFN) are extracellular. The chain crosses the membrane as a helical span at residues 196-219 (EAELFVASVVFLIVPVLLILVSYG). Topologically, residues 220 to 236 (FITQAVLRIKSAAGRQK) are cytoplasmic. Residues 237–259 (AFGTCSSHLVVVIIFYGTIIFMY) traverse the membrane as a helical segment. Over 260 to 272 (LQPANRRSKNQGK) the chain is Extracellular. A helical transmembrane segment spans residues 273-292 (FVSLFYTIVTPLLNPIIYTL). Topologically, residues 293–316 (RNKDVKGALRTLILGSAAGQSHKD) are cytoplasmic.

Belongs to the G-protein coupled receptor 1 family.

Its subcellular location is the cell membrane. Functionally, odorant receptor. The chain is Olfactory receptor 2G6 (OR2G6) from Homo sapiens (Human).